Here is a 32-residue protein sequence, read N- to C-terminus: Photosystem II reaction center protein Z (32 aa).

Residues 12–32 (IGSAAWAGLVLLVGTLNYLVI) traverse the membrane as a helical segment.

It belongs to the PsbZ family. As to quaternary structure, PSII is composed of 1 copy each of membrane proteins PsbA, PsbB, PsbC, PsbD, PsbE, PsbF, PsbH, PsbI, PsbJ, PsbK, PsbL, PsbM, PsbT, PsbY, PsbZ, Psb30/Ycf12, at least 3 peripheral proteins of the oxygen-evolving complex and a large number of cofactors. It forms dimeric complexes.

The protein resides in the plastid. It localises to the chloroplast thylakoid membrane. Functionally, may control the interaction of photosystem II (PSII) cores with the light-harvesting antenna, regulates electron flow through the 2 photosystem reaction centers. PSII is a light-driven water plastoquinone oxidoreductase, using light energy to abstract electrons from H(2)O, generating a proton gradient subsequently used for ATP formation. The polypeptide is Photosystem II reaction center protein Z (Euglena anabaena (Euglenaria anabaena)).